A 163-amino-acid chain; its full sequence is HTH-type transcriptional regulator IscR (163 aa).

The 130-residue stretch at 2 to 131 folds into the HTH rrf2-type domain; the sequence is RLTSKGRYAV…NNITLGELVN (130 aa). Positions 28-51 form a DNA-binding region, H-T-H motif; that stretch reads LADISERQGISLSYLEQLFSRLRK. Residues Cys-92, Cys-98, and Cys-104 each coordinate [2Fe-2S] cluster. Basic and acidic residues predominate over residues 140–149; sequence DRQHTHDAPR. Positions 140–163 are disordered; it reads DRQHTHDAPRSTRTQDAIDVKLRA.

It depends on [2Fe-2S] cluster as a cofactor.

Its function is as follows. Regulates the transcription of several operons and genes involved in the biogenesis of Fe-S clusters and Fe-S-containing proteins. The sequence is that of HTH-type transcriptional regulator IscR from Citrobacter koseri (strain ATCC BAA-895 / CDC 4225-83 / SGSC4696).